The sequence spans 1597 residues: Collagen alpha-1(XVII) chain (1597 aa).

2 disordered regions span residues 1–155 and 168–188; these read MDVT…PSTR and GSRS…PIPK. Topologically, residues 1–468 are cytoplasmic; that stretch reads MDVTKKNKRD…CGSCCSWWKW (468 aa). A nonhelical region (NC16A) region spans residues 1 to 567; it reads MDVTKKNKRD…AEQENGNLRG (567 aa). The segment covering 9–19 has biased composition (basic and acidic residues); that stretch reads RDGSEVTERII. 3 stretches are compositionally biased toward polar residues: residues 58–96, 111–120, and 170–184; these read THGS…SPGS, EGSSSGNSSP, and RSAS…SNTL. The necessary for interaction with DST and for the recruitment of DST to hemidesmosome stretch occupies residues 146 to 231; that stretch reads RLQSASPSTR…WSSTLPAGSS (86 aa). A helical; Signal-anchor for type II membrane protein membrane pass occupies residues 469–489; that stretch reads LLGLLLTWLLLLGLLFGLIAL. The Extracellular segment spans residues 490-1597; it reads AEEVRALKAR…KGGSWRLTSY (1108 aa). 5 disordered regions span residues 562 to 857, 907 to 927, 970 to 1041, 1289 to 1316, and 1344 to 1394; these read NGNL…SSSS, LRGP…FRVR, LETY…ISSS, TAGV…VSGA, and FIVG…SSMG. A triple-helical region region spans residues 568-1572; that stretch reads SPGPKGDMGS…ELPLEEQPLA (1005 aa). Over residues 604-632 the composition is skewed to low complexity; sequence PKGQKGSVGEPGMEGPMGQRGREGPMGPR. The segment covering 665–674 has biased composition (gly residues); the sequence is GPKGSGGSPG. Composition is skewed to low complexity over residues 730–748 and 774–796; these read PGAV…AGPD and DPGK…PGRP. Over residues 820–838 the composition is skewed to pro residues; sequence PGPPGPPGAMGPPGPPGAP. Residues 847-857 show a composition bias toward low complexity; it reads AGESFMGSSSS. Composition is skewed to pro residues over residues 910-922, 977-986, 1023-1035, 1296-1310, and 1348-1357; these read PPGP…PPDL, PPGPPGPPGP, PGPP…PGPP, PGPP…PRGP, and PPGPPGPQGP. The span at 1377 to 1393 shows a compositional bias: low complexity; the sequence is SSHSASVSRGSSYSSSM. Asn1493 carries N-linked (GlcNAc...) asparagine glycosylation. The segment at 1531-1566 is disordered; sequence GHPALEGTREKKETKVTKSMRGGEREASPSSHELPL. Residues 1537–1557 are compositionally biased toward basic and acidic residues; sequence GTREKKETKVTKSMRGGEREA. The tract at residues 1573–1597 is nonhelical region (NC1); sequence SVLAMAYGVHVKISPKGGSWRLTSY.

As to quaternary structure, homotrimers of alpha 1(XVII)chains. Interacts (via cytoplasmic region) with ITGB4 (via cytoplasmic region). Interacts (via cytoplasmic region) with DST (via N-terminus). Interacts (via N-terminus) with PLEC. Interacts (via cytoplasmic region) with DSP. In terms of processing, the intracellular/endo domain is disulfide-linked. Post-translationally, prolines at the third position of the tripeptide repeating unit (G-X-Y) are hydroxylated in some or all of the chains. The ectodomain is shedded from the surface of keratinocytes resulting in a 120-kDa soluble form, also named as 120 kDa linear IgA disease antigen homolog. The shedding is mediated by membrane-bound metalloproteases. In terms of tissue distribution, upper lamina lucidalhemidesmosome.

It localises to the cell junction. The protein localises to the hemidesmosome. Its subcellular location is the membrane. The protein resides in the secreted. It is found in the extracellular space. It localises to the extracellular matrix. The protein localises to the basement membrane. Functionally, the 120 kDa linear IgA disease antigen homolog is an anchoring filament component involved in dermal-epidermal cohesion. The sequence is that of Collagen alpha-1(XVII) chain (COL17A1) from Canis lupus familiaris (Dog).